We begin with the raw amino-acid sequence, 438 residues long: Serine--tRNA ligase (438 aa).

245-247 contacts L-serine; that stretch reads TAE. 276–278 serves as a coordination point for ATP; the sequence is RSE. Glutamate 299 lines the L-serine pocket. 363–366 serves as a coordination point for ATP; that stretch reads EISS. Serine 398 provides a ligand contact to L-serine.

Belongs to the class-II aminoacyl-tRNA synthetase family. Type-1 seryl-tRNA synthetase subfamily. As to quaternary structure, homodimer. The tRNA molecule binds across the dimer.

The protein resides in the cytoplasm. The enzyme catalyses tRNA(Ser) + L-serine + ATP = L-seryl-tRNA(Ser) + AMP + diphosphate + H(+). The catalysed reaction is tRNA(Sec) + L-serine + ATP = L-seryl-tRNA(Sec) + AMP + diphosphate + H(+). It functions in the pathway aminoacyl-tRNA biosynthesis; selenocysteinyl-tRNA(Sec) biosynthesis; L-seryl-tRNA(Sec) from L-serine and tRNA(Sec): step 1/1. Its function is as follows. Catalyzes the attachment of serine to tRNA(Ser). Is also able to aminoacylate tRNA(Sec) with serine, to form the misacylated tRNA L-seryl-tRNA(Sec), which will be further converted into selenocysteinyl-tRNA(Sec). This chain is Serine--tRNA ligase, found in Delftia acidovorans (strain DSM 14801 / SPH-1).